The primary structure comprises 42 residues: Large ribosomal subunit protein bL36 (42 aa).

The protein belongs to the bacterial ribosomal protein bL36 family.

In Anaplasma marginale (strain St. Maries), this protein is Large ribosomal subunit protein bL36.